The chain runs to 416 residues: Phosphoglycerate kinase (416 aa).

Substrate is bound by residues 28 to 30 (DMN), R44, 65 to 68 (HQSR), R122, and R162. ATP is bound by residues E337 and 362–365 (GGHI).

It belongs to the phosphoglycerate kinase family. In terms of assembly, monomer.

Its subcellular location is the cytoplasm. It catalyses the reaction (2R)-3-phosphoglycerate + ATP = (2R)-3-phospho-glyceroyl phosphate + ADP. It functions in the pathway carbohydrate degradation; glycolysis; pyruvate from D-glyceraldehyde 3-phosphate: step 2/5. This is Phosphoglycerate kinase from Methanosarcina mazei (strain ATCC BAA-159 / DSM 3647 / Goe1 / Go1 / JCM 11833 / OCM 88) (Methanosarcina frisia).